The following is a 628-amino-acid chain: Junctophilin-4 (628 aa).

At 1–606 the chain is on the cytoplasmic side; it reads MSPGGKFDFD…RPAQPGAANP (606 aa). MORN repeat units lie at residues 50–72, 74–95, 96–117, 118–140, 141–163, and 164–186; these read LGVFTGPGGHSYQGHWQQGKREG, GVERKSRWTYRGEWLGGLKGRS, GVWESVSGLRYAGLWKDGFQDG, YGTETYSDGGTYQGQWQAGKRHG, YGVRQSVPYHQAALLRSPRRTSL, and DSGHSDPPTPPPPLPLPGDEGGS. 2 disordered regions span residues 158 to 214 and 231 to 276; these read PRRT…RTPA and GGRR…LIEG. Positions 170 to 179 are enriched in pro residues; that stretch reads PPTPPPPLPL. 2 stretches are compositionally biased toward low complexity: residues 231–241 and 253–272; these read GGRRSSLGSKR and GSTGPPGSEASGPPAAAPPA. MORN repeat units follow at residues 317–339 and 340–362; these read YGRTTRPDGSREEGKYKRNRLVH and GGRVRSLLPLALRRGKVKEKVDR. The disordered stretch occupies residues 415-602; sequence DLQPMLEAPG…AATERPAQPG (188 aa). Positions 432–443 are enriched in acidic residues; sequence EGSDTEPLDEDS. Low complexity-rich tracts occupy residues 453–467 and 528–541; these read PSEGSPELPSSPASS and GSPLLGGCSDSSGS. A helical; Anchor for type IV membrane protein membrane pass occupies residues 607-628; that stretch reads LVVGAVALLDLSLAFLFSQLLT.

The protein belongs to the junctophilin family.

Its subcellular location is the cell membrane. The protein localises to the endoplasmic reticulum membrane. Its function is as follows. Junctophilins contribute to the formation of junctional membrane complexes (JMCs) which link the plasma membrane with the endoplasmic or sarcoplasmic reticulum in excitable cells. Provides a structural foundation for functional cross-talk between the cell surface and intracellular calcium release channels. JPH4 is brain-specific and appears to have an active role in certain neurons involved in motor coordination and memory. In Homo sapiens (Human), this protein is Junctophilin-4 (JPH4).